We begin with the raw amino-acid sequence, 363 residues long: Chorismate synthase (363 aa).

Position 47 (R47) interacts with NADP(+). FMN is bound by residues 124–126, G286, 301–305, and R327; these read RAS and KPTAT.

It belongs to the chorismate synthase family. As to quaternary structure, homotetramer. FMNH2 serves as cofactor.

The enzyme catalyses 5-O-(1-carboxyvinyl)-3-phosphoshikimate = chorismate + phosphate. It participates in metabolic intermediate biosynthesis; chorismate biosynthesis; chorismate from D-erythrose 4-phosphate and phosphoenolpyruvate: step 7/7. In terms of biological role, catalyzes the anti-1,4-elimination of the C-3 phosphate and the C-6 proR hydrogen from 5-enolpyruvylshikimate-3-phosphate (EPSP) to yield chorismate, which is the branch point compound that serves as the starting substrate for the three terminal pathways of aromatic amino acid biosynthesis. This reaction introduces a second double bond into the aromatic ring system. This chain is Chorismate synthase, found in Prochlorococcus marinus (strain MIT 9211).